Here is a 431-residue protein sequence, read N- to C-terminus: Serine hydroxymethyltransferase (431 aa).

122 to 124 serves as a coordination point for (6S)-5,6,7,8-tetrahydrofolate; the sequence is GHI. At Lys-228 the chain carries N6-(pyridoxal phosphate)lysine. Residue Glu-245 coordinates (6S)-5,6,7,8-tetrahydrofolate.

It belongs to the SHMT family. In terms of assembly, homodimer. The cofactor is pyridoxal 5'-phosphate.

The protein resides in the cytoplasm. It participates in amino-acid biosynthesis; glycine biosynthesis; glycine from L-serine: step 1/1. Functionally, catalyzes the reversible interconversion of serine and glycine with a modified folate serving as the one-carbon carrier. Also exhibits a pteridine-independent aldolase activity toward beta-hydroxyamino acids, producing glycine and aldehydes, via a retro-aldol mechanism. This is Serine hydroxymethyltransferase from Thermococcus kodakarensis (strain ATCC BAA-918 / JCM 12380 / KOD1) (Pyrococcus kodakaraensis (strain KOD1)).